The following is a 37-amino-acid chain: Large ribosomal subunit protein bL36 (37 aa).

It belongs to the bacterial ribosomal protein bL36 family.

This Legionella pneumophila subsp. pneumophila (strain Philadelphia 1 / ATCC 33152 / DSM 7513) protein is Large ribosomal subunit protein bL36.